The chain runs to 185 residues: Ribose 1,5-bisphosphate phosphokinase PhnN (185 aa).

13–20 (GPSGAGKD) is an ATP binding site.

This sequence belongs to the ribose 1,5-bisphosphokinase family.

The catalysed reaction is alpha-D-ribose 1,5-bisphosphate + ATP = 5-phospho-alpha-D-ribose 1-diphosphate + ADP. Its pathway is metabolic intermediate biosynthesis; 5-phospho-alpha-D-ribose 1-diphosphate biosynthesis; 5-phospho-alpha-D-ribose 1-diphosphate from D-ribose 5-phosphate (route II): step 3/3. Functionally, catalyzes the phosphorylation of ribose 1,5-bisphosphate to 5-phospho-D-ribosyl alpha-1-diphosphate (PRPP). The chain is Ribose 1,5-bisphosphate phosphokinase PhnN from Chromobacterium violaceum (strain ATCC 12472 / DSM 30191 / JCM 1249 / CCUG 213 / NBRC 12614 / NCIMB 9131 / NCTC 9757 / MK).